A 220-amino-acid polypeptide reads, in one-letter code: uncharacterized protein (220 aa).

Transmembrane regions (helical) follow at residues 9–29, 54–74, 105–125, and 177–197; these read LWITLAILTLVVMINIHGSTQ, YAVHGMRFFALFFWLVPFLAV, VQGIAFVVLICLPLLTAIHLW, and VLAVILTAVSVYLTLRLVIEM.

The protein resides in the cell membrane. This is an uncharacterized protein from Sinorhizobium fredii (strain NBRC 101917 / NGR234).